Reading from the N-terminus, the 73-residue chain is Sodium channel neurotoxin MeuNaTxalpha-13 (73 aa).

The signal sequence occupies residues 1–5 (TGVES). The LCN-type CS-alpha/beta domain maps to 7 to 71 (RDAYIAKPHN…VPIRIPGKCH (65 aa)). Cystine bridges form between Cys-17-Cys-70, Cys-21-Cys-43, Cys-29-Cys-53, and Cys-33-Cys-55. Positions 72-73 (RR) are cleaved as a propeptide — removed by a carboxypeptidase.

This sequence belongs to the long (4 C-C) scorpion toxin superfamily. Sodium channel inhibitor family. Alpha subfamily. Expressed by the venom gland.

The protein resides in the secreted. In terms of biological role, alpha toxins bind voltage-independently at site-3 of sodium channels (Nav) and inhibit the inactivation of the activated channels, thereby blocking neuronal transmission. The sequence is that of Sodium channel neurotoxin MeuNaTxalpha-13 from Mesobuthus eupeus (Lesser Asian scorpion).